Here is a 204-residue protein sequence, read N- to C-terminus: Recombination protein RecR (204 aa).

Residues 58-75 (CSVCQNITDLGVDPCHIC) form a C4-type zinc finger. The 99-residue stretch at 83-181 (SVICVVESPT…NVTRIARGIP (99 aa)) folds into the Toprim domain.

The protein belongs to the RecR family.

Its function is as follows. May play a role in DNA repair. It seems to be involved in an RecBC-independent recombinational process of DNA repair. It may act with RecF and RecO. The chain is Recombination protein RecR from Chlorobaculum tepidum (strain ATCC 49652 / DSM 12025 / NBRC 103806 / TLS) (Chlorobium tepidum).